A 53-amino-acid polypeptide reads, in one-letter code: MILALGDFLTNRKTKHARGPGFNSQLAPFIFDYLFPIGRVTDFFYFFQGPFVL.

This is an uncharacterized protein from Saccharomyces cerevisiae (strain ATCC 204508 / S288c) (Baker's yeast).